Here is a 424-residue protein sequence, read N- to C-terminus: Riboflavin biosynthesis protein RibBA (424 aa).

The interval 1–204 (MTRFDSIERA…IADLIAWRRK (204 aa)) is DHBP synthase. Residues 28–29 (RE), D33, 141–145 (RPGHT), and E165 contribute to the D-ribulose 5-phosphate site. E29 is a binding site for Mg(2+). H144 provides a ligand contact to Mg(2+). Residues 205-424 (HEKHVLRIAE…QNTAQPGTAL (220 aa)) are GTP cyclohydrolase II. 259–263 (RVHSE) contacts GTP. Zn(2+) contacts are provided by C264, C275, and C277. Residues Q280, 303–305 (EGR), and T325 contribute to the GTP site. Residue D337 is the Proton acceptor; for GTP cyclohydrolase activity of the active site. R339 serves as the catalytic Nucleophile; for GTP cyclohydrolase activity. T360 and K365 together coordinate GTP.

In the N-terminal section; belongs to the DHBP synthase family. It in the C-terminal section; belongs to the GTP cyclohydrolase II family. Mg(2+) serves as cofactor. Mn(2+) is required as a cofactor. It depends on Zn(2+) as a cofactor.

The catalysed reaction is D-ribulose 5-phosphate = (2S)-2-hydroxy-3-oxobutyl phosphate + formate + H(+). It catalyses the reaction GTP + 4 H2O = 2,5-diamino-6-hydroxy-4-(5-phosphoribosylamino)-pyrimidine + formate + 2 phosphate + 3 H(+). Its pathway is cofactor biosynthesis; riboflavin biosynthesis; 2-hydroxy-3-oxobutyl phosphate from D-ribulose 5-phosphate: step 1/1. It participates in cofactor biosynthesis; riboflavin biosynthesis; 5-amino-6-(D-ribitylamino)uracil from GTP: step 1/4. In terms of biological role, catalyzes the conversion of D-ribulose 5-phosphate to formate and 3,4-dihydroxy-2-butanone 4-phosphate. Functionally, catalyzes the conversion of GTP to 2,5-diamino-6-ribosylamino-4(3H)-pyrimidinone 5'-phosphate (DARP), formate and pyrophosphate. This chain is Riboflavin biosynthesis protein RibBA, found in Rhodococcus erythropolis (strain PR4 / NBRC 100887).